Consider the following 248-residue polypeptide: Probable transcriptional regulatory protein P9303_05381 (248 aa).

It belongs to the TACO1 family.

It is found in the cytoplasm. This is Probable transcriptional regulatory protein P9303_05381 from Prochlorococcus marinus (strain MIT 9303).